Consider the following 437-residue polypeptide: Double-stranded RNA-binding protein 3 (437 aa).

The segment at 1–22 (MKKKSAPTPLPPETANTSPAPI) is disordered. DRBM domains are found at residues 35–104 (VFKS…EIVK) and 120–187 (LCKN…AIQG). Composition is skewed to basic and acidic residues over residues 288-310 (AKRV…ENQH) and 320-330 (DEARVEQEPSR). The disordered stretch occupies residues 288-331 (AKRVEDEPPRDIEMVQPDKENQHSDAALVQPDDEARVEQEPSRD).

Binds double-stranded RNA. This is Double-stranded RNA-binding protein 3 (DRB3) from Oryza sativa subsp. japonica (Rice).